A 347-amino-acid polypeptide reads, in one-letter code: GMP reductase (347 aa).

108 to 131 (ADFQKTKDIMAISDEFIFICIDIA) serves as a coordination point for NADP(+). K(+) contacts are provided by Gly-181 and Gly-183. The active-site Thioimidate intermediate is Cys-186. An NADP(+)-binding site is contributed by 216 to 239 (IIGDGGCSCAGDVAKAFGGGADFV).

The protein belongs to the IMPDH/GMPR family. GuaC type 1 subfamily. As to quaternary structure, homotetramer.

The catalysed reaction is IMP + NH4(+) + NADP(+) = GMP + NADPH + 2 H(+). In terms of biological role, catalyzes the irreversible NADPH-dependent deamination of GMP to IMP. It functions in the conversion of nucleobase, nucleoside and nucleotide derivatives of G to A nucleotides, and in maintaining the intracellular balance of A and G nucleotides. This is GMP reductase from Vibrio campbellii (strain ATCC BAA-1116).